A 255-amino-acid polypeptide reads, in one-letter code: Diphthine synthase (255 aa).

Residues Leu9, Asp85, Val88, 113-114 (SI), Leu164, Ala207, and His232 contribute to the S-adenosyl-L-methionine site.

Belongs to the diphthine synthase family. In terms of assembly, homodimer.

The enzyme catalyses 2-[(3S)-amino-3-carboxypropyl]-L-histidyl-[translation elongation factor 2] + 3 S-adenosyl-L-methionine = diphthine-[translation elongation factor 2] + 3 S-adenosyl-L-homocysteine + 3 H(+). The protein operates within protein modification; peptidyl-diphthamide biosynthesis. S-adenosyl-L-methionine-dependent methyltransferase that catalyzes the trimethylation of the amino group of the modified target histidine residue in translation elongation factor 2 (EF-2), to form an intermediate called diphthine. The three successive methylation reactions represent the second step of diphthamide biosynthesis. In Methanococcus maripaludis (strain C5 / ATCC BAA-1333), this protein is Diphthine synthase.